The primary structure comprises 115 residues: MELLNQKKIASLTEEIGADNVPVLLEIFLSELESYLKVLCDATYSDKLVYLKDISHALKSSAASFGADALCHFAVEIDTRAKEGDALDETQDVVAMIDRLHQTQQAYLSWQANGF.

Residues glycine 17 to tyrosine 107 form the HPt domain. Position 56 is a phosphohistidine (histidine 56).

In terms of assembly, monomer.

In terms of biological role, phosphorelay protein which receives a sensory signal from a sensor kinase and transmit it to LuxO. At low cell density, a phosphoryl group is transferred from the sensor kinase, probably on His-56 and this phosphoryl group is further transferred to LuxO. The chain is Phosphorelay protein LuxU (luxU) from Vibrio vulnificus (strain CMCP6).